Reading from the N-terminus, the 215-residue chain is Probable septum site-determining protein MinC (215 aa).

The protein belongs to the MinC family. In terms of assembly, interacts with MinD and FtsZ.

Its function is as follows. Cell division inhibitor that blocks the formation of polar Z ring septums. Rapidly oscillates between the poles of the cell to destabilize FtsZ filaments that have formed before they mature into polar Z rings. Prevents FtsZ polymerization. The sequence is that of Probable septum site-determining protein MinC from Clostridium botulinum (strain Alaska E43 / Type E3).